A 166-amino-acid chain; its full sequence is Large ribosomal subunit protein bL17 (166 aa).

The tract at residues 122-166 is disordered; that stretch reads PESAPVKAKQDRSKRVRGSKKTQEGSEKAEVSASAGEAAAVTEEK. Residues 142-151 show a composition bias toward basic and acidic residues; sequence KTQEGSEKAE. A compositionally biased stretch (low complexity) spans 152 to 166; sequence VSASAGEAAAVTEEK.

It belongs to the bacterial ribosomal protein bL17 family. Part of the 50S ribosomal subunit. Contacts protein L32.

The sequence is that of Large ribosomal subunit protein bL17 from Chlorobium phaeobacteroides (strain BS1).